The following is a 549-amino-acid chain: Leiomodin-2 (549 aa).

Residues 1–42 (MSTFGYRRGLSKYESIDEDELLASLTAEELKELERELEDIEP) form a tropomyosin-binding region. An interaction with tropomyosin alpha region spans residues 1 to 47 (MSTFGYRRGLSKYESIDEDELLASLTAEELKELERELEDIEPDRNLP). Interaction with actin regions lie at residues 1-164 (MSTF…PDNS), 165-499 (KPKT…KEIK), and 523-542 (AHEN…LRRV). 3 positions are modified to phosphoserine: Ser-11, Ser-15, and Ser-24. Disordered regions lie at residues 91-166 (KLAE…NSKP), 179-200 (TNGN…HPCG), 358-455 (MDKQ…PGKK), and 469-534 (ESAQ…IRGS). Composition is skewed to acidic residues over residues 95–105 (EDKEESEEELI) and 113–143 (VSEE…EEVT). 2 stretches are compositionally biased toward polar residues: residues 150–163 (INGT…NPDN) and 179–192 (TNGN…NTES). The span at 358 to 376 (MDKQRQKRMQEQKQQEGHD) shows a compositional bias: basic and acidic residues. Residues 390-401 (TPGSSPYASPRQ) show a composition bias toward polar residues. Residue Ser-406 is modified to Phosphoserine. Pro residues predominate over residues 420–452 (PPSPVAPPPPPPPPPLPPHMLPPPPPPPAPPLP). Positions 457 to 515 (ITRNIAEVIKQQESAQRALQNGQRKKKGKKVKKQPNNILKEIKNSLRSVQEKKMEESSR) form a coiled coil. Residues 469 to 478 (ESAQRALQNG) show a composition bias toward polar residues. The span at 479 to 489 (QRKKKGKKVKK) shows a compositional bias: basic residues. The segment covering 496–514 (KEIKNSLRSVQEKKMEESS) has biased composition (basic and acidic residues). Residues 523–542 (AHENLMEAIRGSSIRQLRRV) enclose the WH2 domain.

Belongs to the tropomodulin family. As to quaternary structure, can bind at least three actin monomers and thereby provides a nucleus for actin filament formation. Interacts (via N-terminus) with tropomyosin alpha (TPM1) (via N-terminus). May also interact with TPM2 (via N-terminus). Interacts with FLII.

It is found in the cytoplasm. The protein resides in the myofibril. The protein localises to the sarcomere. It localises to the m line. Its subcellular location is the cytoskeleton. In terms of biological role, mediates nucleation of actin filaments and thereby promotes actin polymerization. Plays a role in the regulation of actin filament length. Required for normal sarcomere organization in the heart, and for normal heart function. The polypeptide is Leiomodin-2 (Lmod2) (Rattus norvegicus (Rat)).